The sequence spans 121 residues: Basic phospholipase A2 homolog piratoxin-2 (121 aa).

Intrachain disulfides connect cysteine 26–cysteine 115, cysteine 28–cysteine 44, cysteine 43–cysteine 95, cysteine 49–cysteine 121, cysteine 50–cysteine 88, cysteine 57–cysteine 81, and cysteine 75–cysteine 86. Residues 105–117 (KKYRYHLKPFCKK) form an important for membrane-damaging activities in eukaryotes and bacteria; heparin-binding region.

The protein belongs to the phospholipase A2 family. Group II subfamily. K49 sub-subfamily. As to quaternary structure, homodimer; non-covalently linked. As to expression, expressed by the venom gland.

Its subcellular location is the secreted. Snake venom phospholipase A2 (PLA2) homolog that lacks enzymatic activity. Shows myotoxic activity and edema-inducing activities in vivo. A model of myotoxic mechanism has been proposed: an apo Lys49-PLA2 is activated by the entrance of a hydrophobic molecule (e.g. fatty acid) at the hydrophobic channel of the protein leading to a reorientation of a monomer. This reorientation causes a transition between 'inactive' to 'active' states, causing alignment of C-terminal and membrane-docking sites (MDoS) side-by-side and putting the membrane-disruption sites (MDiS) in the same plane, exposed to solvent and in a symmetric position for both monomers. The MDoS region stabilizes the toxin on membrane by the interaction of charged residues with phospholipid head groups. Subsequently, the MDiS region destabilizes the membrane with penetration of hydrophobic residues. This insertion causes a disorganization of the membrane, allowing an uncontrolled influx of ions (i.e. calcium and sodium), and eventually triggering irreversible intracellular alterations and cell death. The protein is Basic phospholipase A2 homolog piratoxin-2 of Bothrops pirajai (Piraja's lancehead).